The sequence spans 120 residues: Adenosylhomocysteinase (120 aa).

Asparagine 34 contacts NAD(+).

The protein belongs to the adenosylhomocysteinase family. The cofactor is NAD(+).

It localises to the cytoplasm. The catalysed reaction is S-adenosyl-L-homocysteine + H2O = L-homocysteine + adenosine. The protein operates within amino-acid biosynthesis; L-homocysteine biosynthesis; L-homocysteine from S-adenosyl-L-homocysteine: step 1/1. In terms of biological role, may play a key role in the regulation of the intracellular concentration of adenosylhomocysteine. The sequence is that of Adenosylhomocysteinase (ahcY) from Streptomyces fradiae (Streptomyces roseoflavus).